The chain runs to 712 residues: Polyribonucleotide nucleotidyltransferase (712 aa).

2 residues coordinate Mg(2+): Asp487 and Asp493. Positions 554–613 (PRIEVMNIPVDKIREVIGSGGKVIREIVEKTGAKINIEDDGTVKIASSSGKEIEAARKWI) constitute a KH domain. The S1 motif domain occupies 623–691 (GQIYEGTVVK…ERGKVRLSMK (69 aa)).

This sequence belongs to the polyribonucleotide nucleotidyltransferase family. Requires Mg(2+) as cofactor.

The protein resides in the cytoplasm. The enzyme catalyses RNA(n+1) + phosphate = RNA(n) + a ribonucleoside 5'-diphosphate. In terms of biological role, involved in mRNA degradation. Catalyzes the phosphorolysis of single-stranded polyribonucleotides processively in the 3'- to 5'-direction. This is Polyribonucleotide nucleotidyltransferase from Rhizobium etli (strain CIAT 652).